A 34-amino-acid chain; its full sequence is Photosystem II reaction center protein M (34 aa).

Residues 7–27 traverse the membrane as a helical segment; sequence GFVASLMFILVPAIFLIVLYI.

It belongs to the PsbM family. PSII is composed of 1 copy each of membrane proteins PsbA, PsbB, PsbC, PsbD, PsbE, PsbF, PsbH, PsbI, PsbJ, PsbK, PsbL, PsbM, PsbT, PsbX, PsbY, PsbZ, Psb30/Ycf12, peripheral proteins PsbO, CyanoQ (PsbQ), PsbU, PsbV and a large number of cofactors. It forms dimeric complexes.

The protein localises to the cellular thylakoid membrane. Functionally, one of the components of the core complex of photosystem II (PSII). PSII is a light-driven water:plastoquinone oxidoreductase that uses light energy to abstract electrons from H(2)O, generating O(2) and a proton gradient subsequently used for ATP formation. It consists of a core antenna complex that captures photons, and an electron transfer chain that converts photonic excitation into a charge separation. This subunit is found at the monomer-monomer interface. This chain is Photosystem II reaction center protein M, found in Synechococcus sp. (strain CC9605).